Here is a 33-residue protein sequence, read N- to C-terminus: uncharacterized protein (33 aa).

This is an uncharacterized protein from Staphylococcus aureus (strain MW2).